The sequence spans 418 residues: Dihydrolipoyllysine-residue acetyltransferase component of pyruvate dehydrogenase complex (418 aa).

In terms of domain architecture, Lipoyl-binding spans 2 to 78 (PIKLLMPALS…PVNSLIAVLI (77 aa)). The residue at position 43 (K43) is an N6-lipoyllysine. The Peripheral subunit-binding (PSBD) domain occupies 133–170 (FASPLAKRLAKIQNVRIEEIKGSGPHGRIIKQDVLSHK). H388 is an active-site residue.

The protein belongs to the 2-oxoacid dehydrogenase family. Forms a 24-polypeptide structural core with octahedral symmetry. Requires (R)-lipoate as cofactor.

The enzyme catalyses N(6)-[(R)-dihydrolipoyl]-L-lysyl-[protein] + acetyl-CoA = N(6)-[(R)-S(8)-acetyldihydrolipoyl]-L-lysyl-[protein] + CoA. In terms of biological role, the pyruvate dehydrogenase complex catalyzes the overall conversion of pyruvate to acetyl-CoA and CO(2). It contains multiple copies of three enzymatic components: pyruvate dehydrogenase (E1), dihydrolipoamide acetyltransferase (E2) and lipoamide dehydrogenase (E3). This chain is Dihydrolipoyllysine-residue acetyltransferase component of pyruvate dehydrogenase complex (pdhC), found in Rickettsia bellii (strain RML369-C).